Reading from the N-terminus, the 655-residue chain is MTFEIKHRDAMGRIGILNINGKKIETPTIMPVIHPNPKKQIVSMDLINKLADVIITNSYITYKTKHLREIAEEKGIHKLIGFDKVIVTDSGSFQLGVYGDVEVEPMEIIEFQERIGVDVGTILDIPTPPDVDRERAEKELEETLKRAKASIELKEERGFKLLLNGTVQGSTYLDLRQKSAKEMAKLGFDIYPIGAVVPLMEQYRYRDVAEIIINSKMYLPTNKPVHLFGCGHPMFFALAVALGCDLFDSAAYALYAKDDRYLTERGTLHLEEIKDLKAFPCSCPVCSSYTPKELASLNKKERERLLAEHNLYVTFEEINRIKQAIRDGSLWELVEERVRCHPKLLEAYRVVRKYIDYIEKFDPVTKKSAFFYTGIESMFRPEVLRHKKRLKRLRYEKVYITTVSSSIEKPYHEHLNVVETDVDILIKDPVFGFIPYYIDTVYPLSQHEIPELFDYEKEINKRFVDEFIDWLKKKIGEDNILDIMTYNYYINYFSANKKINADALRIRKMLQYQYGFDIIDDELMNKIKVVRSKTTGRLRQVLDENGEILFSVRSNDNLLIPSEKGAKLLWKKIPFPKYRVVVNKEAEEFAREGRNVFAKFVIDCDEELRPYEEVLVVNEDDELLAYGTTILNGIELREFNYGLAVKVRGGLKINK.

D89 functions as the Nucleophile in the catalytic mechanism. Positions 124 and 195 each coordinate substrate. Zn(2+) is bound by residues C281, C283, and C286. The PUA domain occupies 577 to 652 (KYRVVVNKEA…LAVKVRGGLK (76 aa)).

The protein belongs to the archaeosine tRNA-ribosyltransferase family. Zn(2+) serves as cofactor.

The catalysed reaction is guanosine(15) in tRNA + 7-cyano-7-deazaguanine = 7-cyano-7-carbaguanosine(15) in tRNA + guanine. Its pathway is tRNA modification; archaeosine-tRNA biosynthesis. In terms of biological role, exchanges the guanine residue with 7-cyano-7-deazaguanine (preQ0) at position 15 in the dihydrouridine loop (D-loop) of archaeal tRNAs. Can also utilize guanine as substrate. The chain is tRNA-guanine(15) transglycosylase from Methanocaldococcus jannaschii (strain ATCC 43067 / DSM 2661 / JAL-1 / JCM 10045 / NBRC 100440) (Methanococcus jannaschii).